The sequence spans 388 residues: Transcription factor SOX-7 (388 aa).

Disordered regions lie at residues 20-46 (DAEL…SRIR) and 140-197 (RDQN…VDTY). Composition is skewed to basic and acidic residues over residues 36–45 (PGDKGSESRI) and 146–164 (PEKR…DRGE). A DNA-binding region (HMG box) is located at residues 45–113 (IRRPMNAFMV…QHMQDYPNYK (69 aa)). Residues 268 to 388 (VSMMSPVPGC…ATYYNSYSVS (121 aa)) enclose the Sox C-terminal domain.

As to quaternary structure, interacts with CTNNB1/beta-catenin; this interaction may lead to the proteasomal degradation of active CTNNB1 and thus inhibition of Wnt/beta-catenin-stimulated transcription. As to expression, widely expressed in adult and fetal tissues. Present both in mesenchymal and epithelial cells in some adult tissues, including colon. Tends to be down-regulated in prostate adenocarcinomas and colorectal tumors due to promoter hypermethylation.

The protein resides in the nucleus. Its subcellular location is the cytoplasm. Its function is as follows. Binds to and activates the CDH5 promoter, hence plays a role in the transcriptional regulation of genes expressed in the hemogenic endothelium and blocks further differentiation into blood precursors. May be required for the survival of both hematopoietic and endothelial precursors during specification. Competes with GATA4 for binding and activation of the FGF3 promoter. Represses Wnt/beta-catenin-stimulated transcription, probably by targeting CTNNB1 to proteasomal degradation. Binds the DNA sequence 5'-AACAAT-3'. The chain is Transcription factor SOX-7 (SOX7) from Homo sapiens (Human).